We begin with the raw amino-acid sequence, 455 residues long: UDP-N-acetylmuramoylalanine--D-glutamate ligase (455 aa).

Position 119 to 125 (119 to 125 (GTNGKTT)) interacts with ATP.

The protein belongs to the MurCDEF family.

Its subcellular location is the cytoplasm. The enzyme catalyses UDP-N-acetyl-alpha-D-muramoyl-L-alanine + D-glutamate + ATP = UDP-N-acetyl-alpha-D-muramoyl-L-alanyl-D-glutamate + ADP + phosphate + H(+). It functions in the pathway cell wall biogenesis; peptidoglycan biosynthesis. Its function is as follows. Cell wall formation. Catalyzes the addition of glutamate to the nucleotide precursor UDP-N-acetylmuramoyl-L-alanine (UMA). This is UDP-N-acetylmuramoylalanine--D-glutamate ligase from Listeria innocua serovar 6a (strain ATCC BAA-680 / CLIP 11262).